Reading from the N-terminus, the 254-residue chain is DNA repair protein RecO (254 aa).

The protein belongs to the RecO family.

Functionally, involved in DNA repair and RecF pathway recombination. This is DNA repair protein RecO from Anaeromyxobacter dehalogenans (strain 2CP-1 / ATCC BAA-258).